The primary structure comprises 357 residues: MADKGSGGSRLPLALPPASQGCSSGSSGSSAGGSGNPRLPRNLQGLLQMAITAGSEEPDPPPEPMSEERRQWLQEAMSAAFRGQREEVEQMKNCLRVLSQATPPTAGEAELATDQQEREGALELLADLCENMDNAADFCQLSGMHLLVGRYLEAGAAGLRWRAAQLIGTCSQNVAAIQEQVLGLGALRKLLRLLDRDSCDTVRVKALFAISCLVREQEAGLLQFLRLDGFSVLMRAMQQQVQKLKVKSAFLLQNLLVGHPEHKGTLCSMGMVQQLVALVRTEHSPFHEHVLGALCSLVTDFPQGVRECREPELGLEELLRHRCQLLQQHEEYQEELEFCEKLLQTCFSSPTDDSMDR.

Positions 1 to 69 (MADKGSGGSR…PPPEPMSEER (69 aa)) are disordered. Low complexity predominate over residues 19 to 29 (SQGCSSGSSGS). ARM repeat units follow at residues 130-172 (ENMD…TCSQ), 175-215 (AAIQ…CLVR), 218-257 (EAGLLQFLRLDGFSVLMRAMQQQVQKLKVKSAFLLQNLLV), and 260-299 (PEHKGTLCSMGMVQQLVALVRTEHSPFHEHVLGALCSLVT). Phosphoserine is present on residues Ser349 and Ser354.

As to quaternary structure, interacts with the ATP-binding domain of HSPA1A. Detected in a ternary complex containing STUB1, HSPA1A and HSPBP1. Interacts with PGLYRP1; this interaction blocks the cytotoxic activity of the PGLYRP1-HSPA1A complex. As to expression, ubiquitous.

Inhibits HSPA1A chaperone activity by changing the conformation of the ATP-binding domain of HSPA1A and interfering with ATP binding. Interferes with ubiquitination mediated by STUB1 and inhibits chaperone-assisted degradation of target proteins. The polypeptide is Hsp70-binding protein 1 (Hspbp1) (Rattus norvegicus (Rat)).